Here is a 497-residue protein sequence, read N- to C-terminus: Serine hydroxymethyltransferase (497 aa).

(6S)-5,6,7,8-tetrahydrofolate-binding positions include Leu-176 and 180 to 182 (GHL). Residue Lys-289 is modified to N6-(pyridoxal phosphate)lysine.

It belongs to the SHMT family. In terms of assembly, homodimer. Pyridoxal 5'-phosphate is required as a cofactor.

Its subcellular location is the cytoplasm. The enzyme catalyses (6R)-5,10-methylene-5,6,7,8-tetrahydrofolate + glycine + H2O = (6S)-5,6,7,8-tetrahydrofolate + L-serine. Its pathway is one-carbon metabolism; tetrahydrofolate interconversion. It functions in the pathway amino-acid biosynthesis; glycine biosynthesis; glycine from L-serine: step 1/1. Its function is as follows. Catalyzes the reversible interconversion of serine and glycine with tetrahydrofolate (THF) serving as the one-carbon carrier. This reaction serves as the major source of one-carbon groups required for the biosynthesis of purines, thymidylate, methionine, and other important biomolecules. Also exhibits THF-independent aldolase activity toward beta-hydroxyamino acids, producing glycine and aldehydes, via a retro-aldol mechanism. The chain is Serine hydroxymethyltransferase from Chlamydia felis (strain Fe/C-56) (Chlamydophila felis).